A 298-amino-acid polypeptide reads, in one-letter code: Myoblast determination protein 1 homolog (298 aa).

Over residues 53-73 (PEEHPHTRAPPREPTEEEHVR) the composition is skewed to basic and acidic residues. Residues 53–77 (PEEHPHTRAPPREPTEEEHVRAPSG) form a disordered region. The 52-residue stretch at 100–151 (DRRKAATMRERRRLSKVNEAFETLKRCTSTNPNQRLPKVEILRNAIRYIESL) folds into the bHLH domain. Disordered regions lie at residues 170–220 (SGES…GKSS) and 242–298 (CPIL…YQVL). Composition is skewed to polar residues over residues 173–183 (SDASSPRSNCS) and 257–284 (CSPQ…LPQE).

Efficient DNA binding requires dimerization with another bHLH protein. Seems to form active heterodimers with ITF-2.

Its subcellular location is the nucleus. Acts as a transcriptional activator that promotes transcription of muscle-specific target genes and plays a role in muscle differentiation. Induces fibroblasts to differentiate into myoblasts. Interacts with and is inhibited by the twist protein. This interaction probably involves the basic domains of both proteins. This is Myoblast determination protein 1 homolog (MYOD1) from Gallus gallus (Chicken).